The sequence spans 198 residues: Pyridoxal 5'-phosphate synthase subunit PdxT (198 aa).

49 to 51 serves as a coordination point for L-glutamine; that stretch reads GES. The active-site Nucleophile is the Cys81. L-glutamine is bound by residues Arg112 and 140–141; that span reads IR. Residues His176 and Glu178 each act as charge relay system in the active site.

The protein belongs to the glutaminase PdxT/SNO family. As to quaternary structure, in the presence of PdxS, forms a dodecamer of heterodimers. Only shows activity in the heterodimer.

It catalyses the reaction aldehydo-D-ribose 5-phosphate + D-glyceraldehyde 3-phosphate + L-glutamine = pyridoxal 5'-phosphate + L-glutamate + phosphate + 3 H2O + H(+). The catalysed reaction is L-glutamine + H2O = L-glutamate + NH4(+). The protein operates within cofactor biosynthesis; pyridoxal 5'-phosphate biosynthesis. Its function is as follows. Catalyzes the hydrolysis of glutamine to glutamate and ammonia as part of the biosynthesis of pyridoxal 5'-phosphate. The resulting ammonia molecule is channeled to the active site of PdxS. This chain is Pyridoxal 5'-phosphate synthase subunit PdxT, found in Methanocella arvoryzae (strain DSM 22066 / NBRC 105507 / MRE50).